The chain runs to 35 residues: Thaumatin-like protein 6 (35 aa).

Belongs to the thaumatin family.

The protein is Thaumatin-like protein 6 of Glebionis coronaria (Crown daisy).